A 202-amino-acid polypeptide reads, in one-letter code: Holliday junction branch migration complex subunit RuvA (202 aa).

Positions 1 to 65 are domain I; it reads MIGYLEGRVV…EDALELFGFA (65 aa). Positions 66–144 are domain II; that stretch reads SLDDRETFRT…GRAPAAGLAP (79 aa). Residues 145-155 are flexible linker; that stretch reads SVPIPGGVAGD. Residues 155–202 form a domain III region; sequence DVVAGLTNLGYPEPEARQVAAEVLEAEPDLDVAAALRQALKRLASAKK.

This sequence belongs to the RuvA family. Homotetramer. Forms an RuvA(8)-RuvB(12)-Holliday junction (HJ) complex. HJ DNA is sandwiched between 2 RuvA tetramers; dsDNA enters through RuvA and exits via RuvB. An RuvB hexamer assembles on each DNA strand where it exits the tetramer. Each RuvB hexamer is contacted by two RuvA subunits (via domain III) on 2 adjacent RuvB subunits; this complex drives branch migration. In the full resolvosome a probable DNA-RuvA(4)-RuvB(12)-RuvC(2) complex forms which resolves the HJ.

It localises to the cytoplasm. The RuvA-RuvB-RuvC complex processes Holliday junction (HJ) DNA during genetic recombination and DNA repair, while the RuvA-RuvB complex plays an important role in the rescue of blocked DNA replication forks via replication fork reversal (RFR). RuvA specifically binds to HJ cruciform DNA, conferring on it an open structure. The RuvB hexamer acts as an ATP-dependent pump, pulling dsDNA into and through the RuvAB complex. HJ branch migration allows RuvC to scan DNA until it finds its consensus sequence, where it cleaves and resolves the cruciform DNA. The polypeptide is Holliday junction branch migration complex subunit RuvA (Solidesulfovibrio magneticus (strain ATCC 700980 / DSM 13731 / RS-1) (Desulfovibrio magneticus)).